Here is a 238-residue protein sequence, read N- to C-terminus: Uridylate kinase (238 aa).

Lysine 12–glycine 15 lines the ATP pocket. Glycine 54 provides a ligand contact to UMP. Positions 55 and 59 each coordinate ATP. UMP-binding positions include aspartate 74 and threonine 135–threonine 142. Residues threonine 162, tyrosine 168, and aspartate 171 each coordinate ATP.

The protein belongs to the UMP kinase family. As to quaternary structure, homohexamer.

It localises to the cytoplasm. It carries out the reaction UMP + ATP = UDP + ADP. The protein operates within pyrimidine metabolism; CTP biosynthesis via de novo pathway; UDP from UMP (UMPK route): step 1/1. Its activity is regulated as follows. Inhibited by UTP. Functionally, catalyzes the reversible phosphorylation of UMP to UDP. The polypeptide is Uridylate kinase (Herminiimonas arsenicoxydans).